A 352-amino-acid chain; its full sequence is MSEQQTMSELKQQALVDINEANDERALQEVKVKYLGKKGSVSGLMKLMKDLPNEEKPAFGQKVNELRQTIQNELDERQQMLVKEKLNKQLAEETIDVSLPGRHIEIGSKHPLTRTIEEIEDLFLGLGYEIVNGYEVEQDHYNFEMLNLPKSHPARDMQDSFYITDEILLRTHTSPVQARTMESRHGQGPVKIICPGKVYRRDSDDATHSHQFTQIEGLVVDKNVKMSDLKGTLELLAKKLFGADREIRLRPSYFPFTEPSVEVDVSCFKCKGKGCNVCKHTGWIEILGAGMVHPNVLEMAGFDSSEYSGFAFGMGPDRIAMLKYGIEDIRHFYTNDVRFLDQFKAVEDRGDM.

Glutamate 258 is a Mg(2+) binding site.

Belongs to the class-II aminoacyl-tRNA synthetase family. Phe-tRNA synthetase alpha subunit type 1 subfamily. In terms of assembly, tetramer of two alpha and two beta subunits. The cofactor is Mg(2+).

It localises to the cytoplasm. It catalyses the reaction tRNA(Phe) + L-phenylalanine + ATP = L-phenylalanyl-tRNA(Phe) + AMP + diphosphate + H(+). The polypeptide is Phenylalanine--tRNA ligase alpha subunit (Staphylococcus aureus (strain Mu3 / ATCC 700698)).